Reading from the N-terminus, the 98-residue chain is MPSISINITLAFTTALLGMLMFRSHMMSSLLCLEGMMLSMFILSTLIILNVQLTMSFMMPILLLVFAACEAAIGLALLVMISNTYGLDYIQNLNLLQC.

The next 3 helical transmembrane spans lie at 2 to 22, 29 to 49, and 61 to 81; these read PSIS…MLMF, SLLC…LIIL, and ILLL…LVMI.

The protein belongs to the complex I subunit 4L family. As to quaternary structure, core subunit of respiratory chain NADH dehydrogenase (Complex I) which is composed of 45 different subunits.

The protein resides in the mitochondrion inner membrane. It catalyses the reaction a ubiquinone + NADH + 5 H(+)(in) = a ubiquinol + NAD(+) + 4 H(+)(out). Its function is as follows. Core subunit of the mitochondrial membrane respiratory chain NADH dehydrogenase (Complex I) which catalyzes electron transfer from NADH through the respiratory chain, using ubiquinone as an electron acceptor. Part of the enzyme membrane arm which is embedded in the lipid bilayer and involved in proton translocation. This Mirza coquereli (Coquerel's giant mouse lemur) protein is NADH-ubiquinone oxidoreductase chain 4L (MT-ND4L).